A 190-amino-acid polypeptide reads, in one-letter code: Potassium-transporting ATPase KdpC subunit (190 aa).

A helical transmembrane segment spans residues 10 to 30 (TFIFLLLITGGVYPLLTTVLG).

This sequence belongs to the KdpC family. As to quaternary structure, the system is composed of three essential subunits: KdpA, KdpB and KdpC.

The protein resides in the cell inner membrane. Part of the high-affinity ATP-driven potassium transport (or Kdp) system, which catalyzes the hydrolysis of ATP coupled with the electrogenic transport of potassium into the cytoplasm. This subunit acts as a catalytic chaperone that increases the ATP-binding affinity of the ATP-hydrolyzing subunit KdpB by the formation of a transient KdpB/KdpC/ATP ternary complex. This Escherichia coli (strain K12 / MC4100 / BW2952) protein is Potassium-transporting ATPase KdpC subunit.